Consider the following 245-residue polypeptide: Probable GTP-binding protein EngB (245 aa).

Residues 46-223 (DVPEIAFVGR…AQHLWDWAHP (178 aa)) form the EngB-type G domain. Residues 54–61 (GRSNAGKS), 81–85 (GRTQS), 103–106 (DLPG), 173–176 (TKSD), and 202–204 (FSS) contribute to the GTP site. Mg(2+) contacts are provided by S61 and T83. The tract at residues 219-245 (DWAHPPEKPAKKPKAEPAAEAATGDEG) is disordered. Over residues 222–235 (HPPEKPAKKPKAEP) the composition is skewed to basic and acidic residues. Residues 236–245 (AAEAATGDEG) are compositionally biased toward low complexity.

The protein belongs to the TRAFAC class TrmE-Era-EngA-EngB-Septin-like GTPase superfamily. EngB GTPase family. Requires Mg(2+) as cofactor.

Functionally, necessary for normal cell division and for the maintenance of normal septation. This is Probable GTP-binding protein EngB from Polaromonas sp. (strain JS666 / ATCC BAA-500).